Here is a 461-residue protein sequence, read N- to C-terminus: MMMFHNCRINNYLITSQIGEGAYGLVYRALDIRTDRQYAIKAVVQSYGVSKEADMGNDKIHKNSVKLQKKLAKLFKESKNVVRVPSIDLESIENMSEEDFKKLPHYKEISLHLRVHHHKNIVTIHEVLQSAVCTFIVMDYYPTDLFTSIVDNRHFVTNGLLVKKVFLQICSALNYCHEHGIYHCDIKPENLLLDTEDNVFLCDFGLSTTSTYIKPNVCIGSSYYMPPERISFDGRVSSSKSGGHKLGKVCPSCNGDLWSLGIILINLTCIRNPWLKADKTEDNTYYYFTKDPNILKQILPLSDDFYSLLSKILQVNPKNRMSLQELMKEVSSITSFTNEGPLSKVPPLSKSVYEKFVSPVDNTNENLSPKSYVYMHDSKAAKNLSYTSSSEEEDGIKEGIDDDNGSRSGSFGTLDTDTGLHSSFTSTSCESDNECSKISNKFSLFEKKFNELRMSSSSLTN.

The 326-residue stretch at 12–337 (YLITSQIGEG…KEVSSITSFT (326 aa)) folds into the Protein kinase domain. Residues 18 to 26 (IGEGAYGLV) and K41 each bind ATP. The Proton acceptor role is filled by D185. Residues 384–433 (LSYTSSSEEEDGIKEGIDDDNGSRSGSFGTLDTDTGLHSSFTSTSCESDN) form a disordered region. Acidic residues predominate over residues 390 to 403 (SEEEDGIKEGIDDD). Residues 406-433 (SRSGSFGTLDTDTGLHSSFTSTSCESDN) show a composition bias toward polar residues.

Belongs to the protein kinase superfamily. Ser/Thr protein kinase family.

The protein localises to the cytoplasm. It carries out the reaction L-seryl-[protein] + ATP = O-phospho-L-seryl-[protein] + ADP + H(+). The catalysed reaction is L-threonyl-[protein] + ATP = O-phospho-L-threonyl-[protein] + ADP + H(+). Probable serine/threonine protein kinase involved in the G1-S transition. The polypeptide is Serine/threonine-protein kinase VHS1 (VHS1) (Saccharomyces cerevisiae (strain ATCC 204508 / S288c) (Baker's yeast)).